The chain runs to 418 residues: Zinc metalloprotease RasP (418 aa).

4 helical membrane-spanning segments follow: residues 5–25 (LAFI…HLYF), 170–190 (MAIF…LLGL), 345–365 (VIFF…MPIP), and 390–410 (EGAI…VVTW). Position 18 (His18) interacts with Zn(2+). Glu19 is a catalytic residue. Zn(2+) is bound at residue His22. The 85-residue stretch at 183 to 267 (GFVILLGLSL…ALQTNATLSQ (85 aa)) folds into the PDZ domain.

It belongs to the peptidase M50B family. The cofactor is Zn(2+).

It localises to the cell membrane. Functionally, is responsible for Site-2 cleavage of the RsiW anti-sigma factor. This results, after a third proteolytic step catalyzed by the ClpXP protease, in the release of SigW and the transcription activation of the genes under the control of the sigma-W factor. This is Zinc metalloprotease RasP (rasP) from Shouchella clausii (strain KSM-K16) (Alkalihalobacillus clausii).